Consider the following 390-residue polypeptide: Adherens junction-associated protein 1 (390 aa).

The first 37 residues, 1-37, serve as a signal peptide directing secretion; that stretch reads MWITQLLGIRSGPPLGSHAWILIAIFQLAMDFIICES. Topologically, residues 38–262 are extracellular; it reads ESPGKAYKHL…NDTSGLAVHQ (225 aa). Residues 218–253 form a disordered region; it reads LQNPGIHNGKKSPGRISTTDPNPGNGKTARPPRIPN. A helical membrane pass occupies residues 263–283; it reads IITITVSLIMVIAALITTLVL. The tract at residues 283-390 is targeting signals; sequence LKNCCAQSGN…VSEKWFEISC (108 aa). The Cytoplasmic segment spans residues 284–390; that stretch reads KNCCAQSGNA…VSEKWFEISC (107 aa).

It localises to the basolateral cell membrane. The protein localises to the apical cell membrane. It is found in the cell junction. Its subcellular location is the adherens junction. Its function is as follows. May play a role in cell adhesion and cell migration. The protein is Adherens junction-associated protein 1 (ajap1) of Xenopus tropicalis (Western clawed frog).